The primary structure comprises 103 residues: Large ribosomal subunit protein bL21 (103 aa).

The protein belongs to the bacterial ribosomal protein bL21 family. As to quaternary structure, part of the 50S ribosomal subunit. Contacts protein L20.

In terms of biological role, this protein binds to 23S rRNA in the presence of protein L20. The protein is Large ribosomal subunit protein bL21 of Wolinella succinogenes (strain ATCC 29543 / DSM 1740 / CCUG 13145 / JCM 31913 / LMG 7466 / NCTC 11488 / FDC 602W) (Vibrio succinogenes).